The chain runs to 153 residues: uncharacterized protein (153 aa).

The protein belongs to the RusA family.

This is an uncharacterized protein from Xylella fastidiosa (strain Temecula1 / ATCC 700964).